We begin with the raw amino-acid sequence, 264 residues long: tRNA (guanine-N(1)-)-methyltransferase (264 aa).

S-adenosyl-L-methionine-binding positions include Gly125 and 145–150; that span reads LGDFVL.

It belongs to the RNA methyltransferase TrmD family. As to quaternary structure, homodimer.

Its subcellular location is the cytoplasm. The enzyme catalyses guanosine(37) in tRNA + S-adenosyl-L-methionine = N(1)-methylguanosine(37) in tRNA + S-adenosyl-L-homocysteine + H(+). Its function is as follows. Specifically methylates guanosine-37 in various tRNAs. The protein is tRNA (guanine-N(1)-)-methyltransferase of Burkholderia mallei (strain NCTC 10247).